Here is a 283-residue protein sequence, read N- to C-terminus: Movement protein (283 aa).

The interval 233 to 283 (SVKRTKSENTPGKRRVNVDSVSLGLGKGKSVSAKNEDTESVFDDGILDSDS) is disordered. Acidic residues predominate over residues 270 to 283 (TESVFDDGILDSDS).

Belongs to the tobamovirus movement protein family.

It is found in the host cytoplasm. The protein localises to the host cytoskeleton. The protein resides in the host cell junction. It localises to the host plasmodesma. In terms of biological role, transports viral genome to neighboring plant cells directly through plasmosdesmata, without any budding. The movement protein allows efficient cell to cell propagation, by bypassing the host cell wall barrier. Forms a ribonucleoprotein complex with viral RNA. Binds microtubules and modulates microtubule stability. Can bind double-stranded DNA. The protein is Movement protein (MP) of Crotalaria juncea (Sunn hemp).